A 635-amino-acid polypeptide reads, in one-letter code: DNA mismatch repair protein MutL (635 aa).

Belongs to the DNA mismatch repair MutL/HexB family.

In terms of biological role, this protein is involved in the repair of mismatches in DNA. It is required for dam-dependent methyl-directed DNA mismatch repair. May act as a 'molecular matchmaker', a protein that promotes the formation of a stable complex between two or more DNA-binding proteins in an ATP-dependent manner without itself being part of a final effector complex. In Yersinia pestis bv. Antiqua (strain Angola), this protein is DNA mismatch repair protein MutL.